The following is a 520-amino-acid chain: Cholesterol side-chain cleavage enzyme, mitochondrial (520 aa).

Residues 1-39 constitute a mitochondrion transit peptide; that stretch reads MLARGLALRSVLVKGCQPFLSAPRECPGHPRVGTGEGAC. Cys-461 is a heme binding site.

The protein belongs to the cytochrome P450 family. As to quaternary structure, interacts with FDX1/adrenodoxin. It depends on heme as a cofactor.

The protein localises to the mitochondrion inner membrane. It catalyses the reaction 6 reduced [adrenodoxin] + cholesterol + 3 O2 + 6 H(+) = 4-methylpentanal + pregnenolone + 6 oxidized [adrenodoxin] + 4 H2O. It carries out the reaction 2 reduced [adrenodoxin] + cholesterol + O2 + 2 H(+) = (22R)-hydroxycholesterol + 2 oxidized [adrenodoxin] + H2O. The catalysed reaction is (22R)-hydroxycholesterol + 2 reduced [adrenodoxin] + O2 + 2 H(+) = (20R,22R)-20,22-dihydroxycholesterol + 2 oxidized [adrenodoxin] + H2O. The enzyme catalyses (20R,22R)-20,22-dihydroxycholesterol + 2 reduced [adrenodoxin] + O2 + 2 H(+) = 4-methylpentanal + pregnenolone + 2 oxidized [adrenodoxin] + 2 H2O. The protein operates within lipid metabolism; C21-steroid hormone metabolism. It functions in the pathway steroid metabolism; cholesterol metabolism. A cytochrome P450 monooxygenase that catalyzes the side-chain hydroxylation and cleavage of cholesterol to pregnenolone, the precursor of most steroid hormones. Catalyzes three sequential oxidation reactions of cholesterol, namely the hydroxylation at C22 followed with the hydroxylation at C20 to yield 20R,22R-hydroxycholesterol that is further cleaved between C20 and C22 to yield the C21-steroid pregnenolone and 4-methylpentanal. Mechanistically, uses molecular oxygen inserting one oxygen atom into a substrate and reducing the second into a water molecule. Two electrons are provided by NADPH via a two-protein mitochondrial transfer system comprising flavoprotein FDXR (adrenodoxin/ferredoxin reductase) and nonheme iron-sulfur protein FDX1 or FDX2 (adrenodoxin/ferredoxin). The chain is Cholesterol side-chain cleavage enzyme, mitochondrial (CYP11A1) from Sus scrofa (Pig).